The sequence spans 1411 residues: MKMLDLYGYTSIAQSFDKICISIASPESIRAMSYGEIKDISTTNYRTFKVEKGGLFCPKIFGPVNDDECLCGKYRKKRYRGVICEKCGVEVTSSKVRRERMGHIELVSPVAHVWFLKSLPSRIGALLDMPLKLIESILYSGDFVVIDPIATPLSKGEVISESAYNQAKDNYGEDSFIALTGAEAIRELLVRLDLHAINANLRSELESTTSEMKRKKIVKRLRIVENFINSGNKPEWMILTVIPILPPDLRPLVSLENGRPAVSDLNHHYRTIINRNNRLGKLLKLNPPAIMIRNEKRMLQEAVDALFDSTRRSYVSNKAGSVGYKKSLSDMLKGKQGRFRQNLLGKRVDYSGRSVIVVGPNLKLHQCGLPKKMALELFKPFICSKLKMYGIVPTVKLANKMIQNEKPEVWDILDEVIHEHPILLNRAPTLHRLGIQAFDPVLIEGKAIQLHPLVCSAFNADFDGDQMAVHIPLSLEAQLEARILMMSTNNILSPSNGKPIIVPSKDIILGIYYLTLQDYVEPEEILFFGDFSHVEYALHNKDIHICSKIKYKMNYCTDSSDGSGPTYYSKIVETTPGRLMLWQIFPEHKNLTFDLVNQVLTVKEITAIVDLVYRSCGQSETVEFSDKLMSLGFRYASQSGISFGRMDMIIPDTKTMHVDNASEKIKEFAVQYQDGLITKSERYNKVIDEWSKCTDLIAKDMMKAISVYDEESKLNSIYMMAHSGARGSASQMKQLAGMRGLMAKPSGEIIETPIISNFREGLNVFEYFNSTHGARKGLADTALKTANSGYLTRRLVDVAQDCIVVEYDCKTHNGFAMRSVIDGGTVVETLDNIILGRVAAVDIYNPITEELLVNAGELIDEAKVEKIRIAGLDAVKVRSPLTCEAKKGICALCYGRDLAIGDVVSIGEAVGVIAAQSVGEPGTQLTMRTFHVGGTAMRGVETSNLIAMLDAKVKLVNSNVVEDKYGNKIVMSRSCDVVLLDSVGNEKMRHSVPYGARLYVNDGQLVKITEKIADWDPYTMPIITEKTGIIKYMDLIDGVSINEVLDESTGISNRVVVDWKLHLQGANLRPRLVLVNDNGDIITLSSGLEANYFIPIGAVLSVQDGQKVHAGDVITRIPRESIKTRDITGGLPRVIELFEARRPKEHAIVSDIDGYVEFGKDYYRSKRRIFIKPVDDKLSPVEYLVPKGKHTIVNEGDFVHKGDLLMDGDPDPHDILRVLGVEALANYMIAEIQQVYRLQGVRIDNKHIEVILRQMLQKVEIFEPGDTMYLIGENVDVEEVLKTNSNMEKIGKSPAKYIPILQGITRASLDTNSFVSAASFQETTKVLTEAAFSGKEDSLYGLKENVIVGRLIPAGTGFLMNKIKKLSLLNKDDYSMYYNSEYQDLASIEAGHACSVSPSQGVSDTSGAVDY.

Positions 69, 71, 84, and 87 each coordinate Zn(2+). Mg(2+) contacts are provided by D461, D463, and D465. Residues C809, C883, C890, and C893 each contribute to the Zn(2+) site.

The protein belongs to the RNA polymerase beta' chain family. In terms of assembly, the RNAP catalytic core consists of 2 alpha, 1 beta, 1 beta' and 1 omega subunit. When a sigma factor is associated with the core the holoenzyme is formed, which can initiate transcription. Requires Mg(2+) as cofactor. Zn(2+) serves as cofactor.

It carries out the reaction RNA(n) + a ribonucleoside 5'-triphosphate = RNA(n+1) + diphosphate. In terms of biological role, DNA-dependent RNA polymerase catalyzes the transcription of DNA into RNA using the four ribonucleoside triphosphates as substrates. This Ehrlichia ruminantium (strain Gardel) protein is DNA-directed RNA polymerase subunit beta'.